The following is a 286-amino-acid chain: Pantothenate synthetase (286 aa).

An ATP-binding site is contributed by 31 to 38 (MGALHDGH). The Proton donor role is filled by His-38. Gln-62 lines the (R)-pantoate pocket. Gln-62 is a binding site for beta-alanine. 148-151 (GKKD) provides a ligand contact to ATP. Gln-154 is a (R)-pantoate binding site. ATP contacts are provided by residues Val-177 and 185 to 188 (KSSR).

Belongs to the pantothenate synthetase family. As to quaternary structure, homodimer.

It is found in the cytoplasm. It carries out the reaction (R)-pantoate + beta-alanine + ATP = (R)-pantothenate + AMP + diphosphate + H(+). It functions in the pathway cofactor biosynthesis; (R)-pantothenate biosynthesis; (R)-pantothenate from (R)-pantoate and beta-alanine: step 1/1. Catalyzes the condensation of pantoate with beta-alanine in an ATP-dependent reaction via a pantoyl-adenylate intermediate. The sequence is that of Pantothenate synthetase from Staphylococcus epidermidis (strain ATCC 35984 / DSM 28319 / BCRC 17069 / CCUG 31568 / BM 3577 / RP62A).